A 262-amino-acid chain; its full sequence is Small ribosomal subunit protein uS2 (262 aa).

A disordered region spans residues 228 to 262; sequence VSNEEVAAEQNIDLDESKEATEAETTEENTSVESN.

Belongs to the universal ribosomal protein uS2 family.

This Staphylococcus saprophyticus subsp. saprophyticus (strain ATCC 15305 / DSM 20229 / NCIMB 8711 / NCTC 7292 / S-41) protein is Small ribosomal subunit protein uS2.